The primary structure comprises 356 residues: Histidinol-phosphate aminotransferase (356 aa).

Position 210 is an N6-(pyridoxal phosphate)lysine (K210).

The protein belongs to the class-II pyridoxal-phosphate-dependent aminotransferase family. Histidinol-phosphate aminotransferase subfamily. As to quaternary structure, homodimer. Pyridoxal 5'-phosphate serves as cofactor.

The catalysed reaction is L-histidinol phosphate + 2-oxoglutarate = 3-(imidazol-4-yl)-2-oxopropyl phosphate + L-glutamate. Its pathway is amino-acid biosynthesis; L-histidine biosynthesis; L-histidine from 5-phospho-alpha-D-ribose 1-diphosphate: step 7/9. The protein is Histidinol-phosphate aminotransferase (hisC) of Acetobacter pasteurianus (Acetobacter turbidans).